A 458-amino-acid chain; its full sequence is MYVPEEIIETIKMIEYQNLDIRTTTLGVNLKDCADKDLDLLKENIYNKITSYGGNLVETANKVSQKYGIPIVNKRISVTPIGLIMGSTLKGLSNEEAVDACVEVGITLDNIAKEVGVDFIGGYSALVQKRATPEEKMLIRSIPKLMTKTDRVCASVNVATTKAGINMYAVKKMGEIVKETSEITKDAIGCAKIVVFCNAPEDNPFMAGAFHGPGEGDAVINAGVSGPGVVRAVVEQLKGKDIGTVSDEIKKTAFKITRMGELVGKEVASELGVDFGIVDLSLAPTPAIGDSIANILEAVGLERCGTHGTTAALAMLNDAVKKGGAMASSNVGGLSGAFIPVSEDAGMIEAVEVGALRLEKLEAMTCVCSVGLDMIAVPGKTPASTLSAIIADEMAIGMINKKTTAVRIIPVPGKDVGDSVEYGGLLGTAPIMPVSEFSSEELIERGGRIPAPIQSLTN.

The protein belongs to the UPF0210 family.

The polypeptide is UPF0210 protein MmarC5_0151 (Methanococcus maripaludis (strain C5 / ATCC BAA-1333)).